We begin with the raw amino-acid sequence, 530 residues long: Membrane-associated transporter protein (530 aa).

Residues Met-1 to Arg-45 lie on the Cytoplasmic side of the membrane. The helical transmembrane segment at Glu-46 to Pro-66 threads the bilayer. Topologically, residues Lys-67–Ser-68 are extracellular. The helical transmembrane segment at Leu-69 to Gly-89 threads the bilayer. Topologically, residues Ser-90–Tyr-105 are cytoplasmic. The helical transmembrane segment at Ile-106–Val-126 threads the bilayer. Residues Val-127–Leu-138 lie on the Extracellular side of the membrane. A helical transmembrane segment spans residues Ile-139–Ile-159. The Cytoplasmic segment spans residues Asp-160 to Ala-184. A helical membrane pass occupies residues Leu-185–Leu-205. Topologically, residues Asp-206–Gln-216 are extracellular. A helical membrane pass occupies residues Val-217–Ile-237. The Cytoplasmic segment spans residues Pro-238–Arg-318. The segment at Lys-275–Arg-299 is disordered. The helical transmembrane segment at Cys-319–Thr-339 threads the bilayer. Topologically, residues Asp-340 to Gly-366 are extracellular. N-linked (GlcNAc...) asparagine glycosylation is present at Asn-356. A helical transmembrane segment spans residues Val-367–Phe-387. The Cytoplasmic portion of the chain corresponds to Gln-388 to Lys-398. The helical transmembrane segment at Gly-399–Pro-419 threads the bilayer. Topologically, residues Asn-420–Leu-425 are extracellular. Residues Val-426–Ile-446 traverse the membrane as a helical segment. Residues Ala-447 to Ala-477 lie on the Cytoplasmic side of the membrane. The helical transmembrane segment at Ala-478 to Val-498 threads the bilayer. Residues Asn-499–Val-504 are Extracellular-facing. Residues Val-505–Phe-525 form a helical membrane-spanning segment. Topologically, residues Val-526–Asp-530 are cytoplasmic.

It belongs to the glycoside-pentoside-hexuronide (GPH) cation symporter transporter (TC 2.A.2) family. Interacts with TYRP1. Mainly expressed in eyeballs and skin melanocytes. Also detected in kidney, colon, gall bladder and pancreas.

It is found in the melanosome membrane. It carries out the reaction sucrose(out) + H(+)(out) = sucrose(in) + H(+)(in). The enzyme catalyses D-glucose(out) + H(+)(out) = D-glucose(in) + H(+)(in). Proton-associated glucose and sucrose transporter. May be able to transport also fructose. Expressed at a late melanosome maturation stage where functions as a proton/glucose exporter which increase lumenal pH by decreasing glycolysis. Regulates melanogenesis by maintaining melanosome neutralization that is initially initiated by transient OCA2 and required for a proper function of the tyrosinase TYR. The polypeptide is Membrane-associated transporter protein (Slc45a2) (Mus musculus (Mouse)).